Consider the following 664-residue polypeptide: Methionine--tRNA ligase (664 aa).

Residues 15 to 25 (YYPSGKLHIGH) carry the 'HIGH' region motif. The short motif at 311 to 315 (KMSKS) is the 'KMSKS' region element. Lys-314 lines the ATP pocket. Positions 536–556 (MQGSAPAKEETKEEEPQEVDR) are disordered. One can recognise a tRNA-binding domain in the interval 570-662 (LRVAEVIEAE…IDQSLPKGTR (93 aa)).

It belongs to the class-I aminoacyl-tRNA synthetase family. MetG type 2B subfamily. In terms of assembly, homodimer.

It is found in the cytoplasm. The enzyme catalyses tRNA(Met) + L-methionine + ATP = L-methionyl-tRNA(Met) + AMP + diphosphate. In terms of biological role, is required not only for elongation of protein synthesis but also for the initiation of all mRNA translation through initiator tRNA(fMet) aminoacylation. The protein is Methionine--tRNA ligase (metG) of Bacillus subtilis (strain 168).